We begin with the raw amino-acid sequence, 560 residues long: Bifunctional NAD(P)H-hydrate repair enzyme (560 aa).

Residues 1-241 are NAD(P)H-hydrate epimerase; that stretch reads MLSRLSERCS…WMTAPERMRA (241 aa). Positions 29-235 constitute a YjeF N-terminal domain; it reads LRDAEPAAAA…SLGLEDWMTA (207 aa). Positions 77–81 are NADPHX 1; for epimerase activity; the sequence is NNGGD. K(+)-binding residues include asparagine 78 and aspartate 145. Residues 149 to 155 form an NADPHX 1; for epimerase activity region; it reads GTGICGP. Tyrosine 160 and aspartate 178 together coordinate (6S)-NADPHX. Serine 181 provides a ligand contact to K(+). Positions 249 to 547 constitute a YjeF C-terminal domain; it reads LDDVYEYFGI…HRVPLIVNAS (299 aa). The tract at residues 249–560 is ADP-dependent (S)-NAD(P)H-hydrate dehydratase; the sequence is LDDVYEYFGI…PATRQRSSGP (312 aa). Glycine 351 contacts (6S)-NADPHX. Residues 417 to 423 are NADPHX 2; for dehydratase activity; that stretch reads HPGEAAR. ADP-binding positions include 454–458 and 475–484; these read KGPGT and NAGMASGGMG. Aspartate 485 contacts (6S)-NADPHX.

The protein in the N-terminal section; belongs to the NnrE/AIBP family. This sequence in the C-terminal section; belongs to the NnrD/CARKD family. K(+) serves as cofactor.

The catalysed reaction is (6S)-NADHX + ADP = AMP + phosphate + NADH + H(+). It carries out the reaction (6S)-NADPHX + ADP = AMP + phosphate + NADPH + H(+). The enzyme catalyses (6R)-NADHX = (6S)-NADHX. It catalyses the reaction (6R)-NADPHX = (6S)-NADPHX. In terms of biological role, bifunctional enzyme that catalyzes the epimerization of the S- and R-forms of NAD(P)HX and the dehydration of the S-form of NAD(P)HX at the expense of ADP, which is converted to AMP. This allows the repair of both epimers of NAD(P)HX, a damaged form of NAD(P)H that is a result of enzymatic or heat-dependent hydration. This is Bifunctional NAD(P)H-hydrate repair enzyme from Leishmania infantum.